A 940-amino-acid polypeptide reads, in one-letter code: Pentatricopeptide repeat-containing protein At5g14770, mitochondrial (940 aa).

The N-terminal 24 residues, 1–24 (MIMIRIWNNYKGKYRFFLSNCRSF), are a transit peptide targeting the mitochondrion. PPR repeat units follow at residues 59 to 93 (YVSL…GVVP), 94 to 129 (DSRL…GVSP), 130 to 161 (DVFA…VISI), 162 to 196 (DTVT…GILP), 197 to 231 (DTVS…NLIT), 241 to 259 (NLHA…GFDP), 260 to 294 (DVVT…SVYP), 295 to 329 (NHVT…GIPV), 330 to 364 (DLVV…NQVP), 365 to 399 (NVVT…SVIP), 400 to 434 (NVVT…NVVP), 435 to 469 (NGFT…GVEE), 470 to 504 (NNYI…GVTL), 505 to 539 (DQIN…GMPW), 540 to 573 (DVVS…GIEP), 574 to 608 (DIAT…GIKP), 609 to 643 (SLMS…EIHP), 644 to 678 (NLTT…GIKL), 679 to 713 (SRQV…GFIP), 714 to 748 (DTVT…GISP), 749 to 783 (NVAT…GMRP), 784 to 818 (DDFT…GLVP), 819 to 853 (KTST…GVSP), and 854 to 891 (NTST…GLLK).

The protein belongs to the PPR family. P subfamily.

It localises to the mitochondrion. This is Pentatricopeptide repeat-containing protein At5g14770, mitochondrial from Arabidopsis thaliana (Mouse-ear cress).